The following is a 634-amino-acid chain: Sodium-dependent multivitamin transporter (634 aa).

12 consecutive transmembrane segments (helical) span residues 23 to 43, 65 to 85, 100 to 120, 142 to 162, 175 to 195, 207 to 227, 255 to 275, 295 to 315, 350 to 370, 403 to 423, 427 to 447, and 455 to 475; these read FSVV…VIGL, MGCL…VAIL, FLGC…IPVF, ICGT…ALYA, LWLS…LGGL, LIMF…VGGL, FWTL…VNQA, AVFP…LVMF, LPGL…SSAF, FAYG…GSVL, LSIF…GMFF, and AIVG…GSIV. N-linked (GlcNAc...) asparagine glycans are attached at residues N488 and N497. Residues 526–546 form a helical membrane-spanning segment; that stretch reads LWYSAHNSTTVIAVGLIVSLL.

The protein belongs to the sodium:solute symporter (SSF) (TC 2.A.21) family. Interacts with PDZD11. Expressed in the jejunum (at protein level). Expressed in lung, skeletal muscle, heart, brain, kidney, intestine, liver, and placenta.

It localises to the cell membrane. Its subcellular location is the apical cell membrane. It catalyses the reaction biotin(out) + 2 Na(+)(out) = biotin(in) + 2 Na(+)(in). The enzyme catalyses (R)-pantothenate(out) + 2 Na(+)(out) = (R)-pantothenate(in) + 2 Na(+)(in). The catalysed reaction is (R)-lipoate(out) + 2 Na(+)(out) = (R)-lipoate(in) + 2 Na(+)(in). It carries out the reaction iodide(out) + 2 Na(+)(out) = iodide(in) + 2 Na(+)(in). Sodium-dependent multivitamin transporter that mediates the electrogenic transport of pantothenate, biotin, lipoate and iodide. Functions as a Na(+)-coupled substrate symporter where the stoichiometry of Na(+):substrate is 2:1, creating an electrochemical Na(+) gradient used as driving force for substrate uptake. Required for biotin and pantothenate uptake in the intestine across the brush border membrane. Plays a role in the maintenance of intestinal mucosa integrity, by providing the gut mucosa with biotin. Contributes to the luminal uptake of biotin and pantothenate into the brain across the blood-brain barrier. The sequence is that of Sodium-dependent multivitamin transporter from Rattus norvegicus (Rat).